The following is a 561-amino-acid chain: Arginine--tRNA ligase (561 aa).

Residues 123 to 133 (PNIAKDMHVGH) carry the 'HIGH' region motif.

The protein belongs to the class-I aminoacyl-tRNA synthetase family. Monomer.

It is found in the cytoplasm. It carries out the reaction tRNA(Arg) + L-arginine + ATP = L-arginyl-tRNA(Arg) + AMP + diphosphate. This chain is Arginine--tRNA ligase (argS), found in Chlamydia pneumoniae (Chlamydophila pneumoniae).